The following is a 294-amino-acid chain: Bifunctional protein FolD (294 aa).

NADP(+) is bound by residues 166 to 168, serine 191, and isoleucine 232; that span reads GRS.

This sequence belongs to the tetrahydrofolate dehydrogenase/cyclohydrolase family. Homodimer.

The catalysed reaction is (6R)-5,10-methylene-5,6,7,8-tetrahydrofolate + NADP(+) = (6R)-5,10-methenyltetrahydrofolate + NADPH. It catalyses the reaction (6R)-5,10-methenyltetrahydrofolate + H2O = (6R)-10-formyltetrahydrofolate + H(+). The protein operates within one-carbon metabolism; tetrahydrofolate interconversion. In terms of biological role, catalyzes the oxidation of 5,10-methylenetetrahydrofolate to 5,10-methenyltetrahydrofolate and then the hydrolysis of 5,10-methenyltetrahydrofolate to 10-formyltetrahydrofolate. The protein is Bifunctional protein FolD of Nitrobacter hamburgensis (strain DSM 10229 / NCIMB 13809 / X14).